We begin with the raw amino-acid sequence, 268 residues long: Ribosomal RNA small subunit methyltransferase A (268 aa).

Positions 18, 20, 45, 66, 91, and 112 each coordinate S-adenosyl-L-methionine.

It belongs to the class I-like SAM-binding methyltransferase superfamily. rRNA adenine N(6)-methyltransferase family. RsmA subfamily.

It localises to the cytoplasm. The catalysed reaction is adenosine(1518)/adenosine(1519) in 16S rRNA + 4 S-adenosyl-L-methionine = N(6)-dimethyladenosine(1518)/N(6)-dimethyladenosine(1519) in 16S rRNA + 4 S-adenosyl-L-homocysteine + 4 H(+). Its function is as follows. Specifically dimethylates two adjacent adenosines (A1518 and A1519) in the loop of a conserved hairpin near the 3'-end of 16S rRNA in the 30S particle. May play a critical role in biogenesis of 30S subunits. The polypeptide is Ribosomal RNA small subunit methyltransferase A (Shewanella putrefaciens (strain CN-32 / ATCC BAA-453)).